Consider the following 541-residue polypeptide: Membrane protein insertase YidC (541 aa).

5 consecutive transmembrane segments (helical) span residues 6-26, 349-369, 420-440, 457-477, and 500-520; these read NILL…WQAD, FVGN…GLLF, GGCL…WVLL, LSVQ…MFVM, and MIFT…WLVG.

Belongs to the OXA1/ALB3/YidC family. Type 1 subfamily. As to quaternary structure, interacts with the Sec translocase complex via SecD. Specifically interacts with transmembrane segments of nascent integral membrane proteins during membrane integration.

It is found in the cell inner membrane. Functionally, required for the insertion and/or proper folding and/or complex formation of integral membrane proteins into the membrane. Involved in integration of membrane proteins that insert both dependently and independently of the Sec translocase complex, as well as at least some lipoproteins. Aids folding of multispanning membrane proteins. This is Membrane protein insertase YidC from Shewanella sp. (strain ANA-3).